The following is a 345-amino-acid chain: Heat-inducible transcription repressor HrcA (345 aa).

The protein belongs to the HrcA family.

In terms of biological role, negative regulator of class I heat shock genes (grpE-dnaK-dnaJ and groELS operons). Prevents heat-shock induction of these operons. This Listeria monocytogenes serotype 1/2a (strain 10403S) protein is Heat-inducible transcription repressor HrcA.